Consider the following 631-residue polypeptide: Probable ATP-dependent RNA helicase DDX53 (631 aa).

The KH domain occupies 48-109; sequence EPPLCFKIKN…EMKAKAKAAI (62 aa). The Q motif signature appears at 222 to 250; the sequence is RFKDAFQQYPDLLKSIIRVGIVKPTPIQS. Residues lysine 244, glutamine 249, 268 to 273, and histidine 311 each bind ATP; that span reads TGTGKT. The Helicase ATP-binding domain maps to 253–428; that stretch reads WPIILQGIDL…LSYLKDPMIV (176 aa). The DEAD box motif lies at 376–379; that stretch reads DEAD. A Helicase C-terminal domain is found at 440–601; that stretch reads TVKQNIIVTT…SVPEDLVVMA (162 aa).

The protein belongs to the DEAD box helicase family. Expressed in testis. Wide expression in various cancer tissues and cancer cell lines.

The protein localises to the nucleus. The catalysed reaction is ATP + H2O = ADP + phosphate + H(+). The protein is Probable ATP-dependent RNA helicase DDX53 (DDX53) of Homo sapiens (Human).